The chain runs to 311 residues: MSQRDTLVHLFAGGCGGTVGAILTCPLEVVKTRLQSSSVTFYISEVQLSTVNGASVARMAPPGPLHCLKLILEKEGPRSLFRGLGPNLVGVAPSRAIYFAAYSTSKEKLNNVFDPDSTQVHMLSAGLAGFTAITATNPIWLIKTRLQLDARNRGERRMSAFECVRRVYQSDGLRGFYRGMSASYAGISETVIHFVIYESIKRKLIEHKANSNMDDEDESVKDASDFVGMMLAAATSKTCATSIAYPHEVIRTRLREEGSKYRSFFQTLNMVFREEGYRALYRGLTTHLVRQIPNTAIMMCTYELVVYLLNG.

Solcar repeat units lie at residues 4–108, 116–203, and 224–308; these read RDTL…SKEK, DSTQ…IKRK, and SDFV…VVYL. 6 helical membrane passes run 7–27, 41–57, 111–131, 180–200, 226–246, and 291–311; these read LVHL…TCPL, FYIS…ASVA, NVFD…AGFT, MSAS…YESI, FVGM…IAYP, and QIPN…LLNG.

The protein belongs to the mitochondrial carrier (TC 2.A.29) family.

The protein localises to the mitochondrion inner membrane. The sequence is that of Solute carrier family 25 member 36-A (slc25a36a) from Danio rerio (Zebrafish).